The following is a 219-amino-acid chain: METPIEREIRRSCEREESLRRSRGLSPGRAGRELVELRVRPVLNLPGPGPALPRALERARAGAQMQRDIEREAHRQAALARPAVPEPRARSPPQPLGELKRFFEAAAGSGSSAGAGDGAGPQRLPEPGGRPRSAVQGGCRVLGSAPPPFTPSLLEQEVRAVREREQELQRQRRSVYGTAEFKEPTPSLTASRGDGKLVVIWPPRRKVSENGLEQEERKP.

3 stretches are compositionally biased toward basic and acidic residues: residues 1 to 20 (METP…ESLR), 30 to 39 (AGRELVELRV), and 156 to 170 (QEVR…ELQR). The tract at residues 1 to 195 (METPIEREIR…PSLTASRGDG (195 aa)) is disordered.

This sequence belongs to the MISP family.

This is an uncharacterized protein from Homo sapiens (Human).